A 278-amino-acid chain; its full sequence is Energy-coupling factor transporter ATP-binding protein EcfA (278 aa).

An ABC transporter domain is found at 4 to 239 (LETRDLKYSY…SETVRSANLR (236 aa)). Residue 37–44 (GPNGAGKS) coordinates ATP.

It belongs to the ABC transporter superfamily. Energy-coupling factor EcfA family. Forms a stable energy-coupling factor (ECF) transporter complex composed of 2 membrane-embedded substrate-binding proteins (S component), 2 ATP-binding proteins (A component) and 2 transmembrane proteins (T component).

The protein localises to the cell membrane. In terms of biological role, ATP-binding (A) component of a common energy-coupling factor (ECF) ABC-transporter complex. Unlike classic ABC transporters this ECF transporter provides the energy necessary to transport a number of different substrates. This is Energy-coupling factor transporter ATP-binding protein EcfA from Methanococcus maripaludis (strain DSM 14266 / JCM 13030 / NBRC 101832 / S2 / LL).